We begin with the raw amino-acid sequence, 1019 residues long: MRYRLAWLLHSALPSTFRSVLGARLPPSERLCGFQKKTYSKMNNPAIKRIGHHIIKSHEDKREYRGLELANGIKVLLVSDPTTDKSSAALDVHIGSLSDPPNIAGLSHFCEHMLFLGTKKYPKENEYSQFLSEHAGSSNAFTSGEHTNYYFDVSHEHLEGALDRFAQFFLCPLFDESCKDREVNAVDSEHEKNVMNDAWRLFQLEKATGNPKHPFSKFGTGNKYTLETRPNQEGIDVRQELLKFHSTYYSSNLMAICVLGRESLDDLTNLVVKLFSEVENKNVPLPEFPEHPFQEEHLKQLYKIVPIKDIRNLYVTFPIPDLQKYYKSNPGHYLGHLIGHEGPGSLLSELKSKGWVNTLVGGQKEGARGFMFFIINVDLTEEGLLHVEDIILHMFQYIQKLRAEGPQEWVFQECKDLNAVAFRFKDKERPRGYTSKIAGILHYYPLEEVLTAEYLLEEFRPDLIEMVLDKLRPENVRVAIVSKSFEGKTDRTEEWYGTQYKQEAIPDEVIKKWQNADLNGKFKLPMKNEFIPTNFEILSLEKEATPYPSLIKDTAMSKLWFKQDDKFFLPKACLNFEFFSPFAYVDPLHCNMAYLYLELLKDSLNEYAYAAELAGLSYDLQNTIYGMYLSVKGYNDKQPILLKKIIEKMATFEIDEKRFEIIKEAYMRSLNNFRAEQPHQHAMYYLRLLMTEVAWTKDELKEALDDVTLPRLKAFIPQLLSRLHIEALLHGNITKQAALGIMQMVEDTLIEHAHTKPLLPSQLVRYREVQLPDRGWFVYQQRNEVHNNCGIEIYYQTDMQSTSENMFLELFCQIISEPCFNTLRTKEQLGYIVFSGPRRANGIQGLRFIIQSEKPPHYLESRVEAFLITMEKSIEDMTEEAFQKHIQALAIRRLDKPKKLSAECAKYWGEIISQQYNFDRDNIEVAYLKTLTKEDIIKFYKEMLAVDAPRRHKVSVHVLAREMDSCPVVGEFPCQNDINLSQAPALPQPEVIQNMTEFKRGLPLFPLVKPHINFMAAKL.

Histidine 108 is a binding site for Zn(2+). The active-site Proton acceptor is glutamate 111. Residues histidine 112 and glutamate 189 each contribute to the Zn(2+) site. Position 192 is an N6-succinyllysine (lysine 192). 359 to 363 (LVGGQ) contributes to the substrate binding site. Arginine 429 serves as a coordination point for ATP. An N6-succinyllysine modification is found at lysine 697. A SlyX motif motif is present at residues 853-858 (EKPPHY). 895 to 901 (DKPKKLS) is a binding site for ATP.

This sequence belongs to the peptidase M16 family. As to quaternary structure, homodimer. Can also form homotetramers. The cofactor is Zn(2+).

The protein localises to the cytoplasm. It is found in the cytosol. Its subcellular location is the cell membrane. It localises to the secreted. The enzyme catalyses Degradation of insulin, glucagon and other polypeptides. No action on proteins.. With respect to regulation, activated by ATP, other nucleotide triphosphates and small peptides. Inhibited by bacitracin. In terms of biological role, plays a role in the cellular breakdown of insulin, APP peptides, IAPP peptides, natriuretic peptides, glucagon, bradykinin, kallidin, and other peptides, and thereby plays a role in intercellular peptide signaling. Substrate binding induces important conformation changes, making it possible to bind and degrade larger substrates, such as insulin. Contributes to the regulation of peptide hormone signaling cascades and regulation of blood glucose homeostasis via its role in the degradation of insulin, glucagon and IAPP. Plays a role in the degradation and clearance of APP-derived amyloidogenic peptides that are secreted by neurons and microglia. Degrades the natriuretic peptides ANP, BNP and CNP, inactivating their ability to raise intracellular cGMP. Also degrades an aberrant frameshifted 40-residue form of NPPA (fsNPPA) which is associated with familial atrial fibrillation in heterozygous patients. Involved in antigen processing. Produces both the N terminus and the C terminus of MAGEA3-derived antigenic peptide (EVDPIGHLY) that is presented to cytotoxic T lymphocytes by MHC class I. The polypeptide is Insulin-degrading enzyme (IDE) (Bos taurus (Bovine)).